Here is a 730-residue protein sequence, read N- to C-terminus: Protein folded gastrulation (730 aa).

Positions 1 to 21 (MSPPNCLLAVLALTVFIGANN) are cleaved as a signal peptide. N-linked (GlcNAc...) asparagine glycosylation is found at asparagine 51 and asparagine 193. Over residues 197 to 211 (TPETSTSITPTSTTT) the composition is skewed to low complexity. Residues 197 to 222 (TPETSTSITPTSTTTFAVPSVPSGEA) form a disordered region. N-linked (GlcNAc...) asparagine glycosylation is found at asparagine 252 and asparagine 289. The segment covering 361-385 (ELEEEVGEEEVTATDILPSEEDEYT) has biased composition (acidic residues). The tract at residues 361–424 (ELEEEVGEEE…SPHPPEEPEI (64 aa)) is disordered. Over residues 386–415 (TETATTTGDTTVAEASMDTSTATSTSGQSS) the composition is skewed to low complexity. Asparagine 459 carries N-linked (GlcNAc...) asparagine glycosylation. Disordered regions lie at residues 474-526 (EDES…GGHK) and 545-583 (KGKQRQQHQPQKQQLEPTSTEITSALTSTSTEDATTTTT). Over residues 478 to 491 (STTTATPEPSSSTP) the composition is skewed to low complexity. Over residues 504–513 (DNDNLMTNTI) the composition is skewed to polar residues. Residues 567-583 (TSALTSTSTEDATTTTT) are compositionally biased toward low complexity. Asparagine 590 and asparagine 639 each carry an N-linked (GlcNAc...) asparagine glycan. A compositionally biased stretch (low complexity) spans 663–676 (SAASTESAGTAATT). The interval 663-683 (SAASTESAGTAATTPNSSSNP) is disordered. Asparagine 678 carries N-linked (GlcNAc...) asparagine glycosylation.

Post-translationally, may be highly O-glycosylated in its Ser/Thr-rich C-terminal part. As to expression, expressed in the invagination primordia in a pattern that precisely precedes the pattern of constrictions.

The protein resides in the secreted. It is found in the extracellular space. The protein localises to the extracellular matrix. Its function is as follows. Coordinates cell shape changes during formation of the ventral furrow and invagination of the posterior midgut primordium, by inducing apical constriction of cells in spatially and temporally defined manners. Could function as a secreted signal to initiate apical constriction by acting as a ligand for an unidentified G protein-coupled receptor, which in turn activates the G protein alpha subunit encoded by concertina, in neighboring cells. Such an intracellular pathway would ultimately induce contraction of the apical actin-myosin network. In the ventral furrow, fog appears to ensure that all the cells initiate constriction within several minutes of each other. In the posterior midgut invagination, fog appears to direct the ordered progression of constriction initiations out from a central region and also to delimit the peripheral extent of this spreading. The chain is Protein folded gastrulation (fog) from Drosophila melanogaster (Fruit fly).